The following is an 85-amino-acid chain: Kappa-theraphotoxin-Cg1d (85 aa).

Positions 1–21 are cleaved as a signal peptide; it reads MKVSVLITLAVLGVMFVWASA. Positions 22-51 are excised as a propeptide; that stretch reads AELEERGSDQRDSPAWLKSMERIFQSEERE. Cystine bridges form between Cys52/Cys66, Cys59/Cys71, and Cys65/Cys78.

Belongs to the neurotoxin 10 (Hwtx-1) family. 28 (Jztx-11) subfamily. In terms of tissue distribution, expressed by the venom gland.

The protein resides in the secreted. In terms of biological role, probable ion channel inhibitor. This Chilobrachys guangxiensis (Chinese earth tiger tarantula) protein is Kappa-theraphotoxin-Cg1d.